Consider the following 648-residue polypeptide: Phosphomethylpyrimidine synthase (648 aa).

Substrate is bound by residues Asn-253, Met-282, Tyr-311, His-347, 367 to 369, 408 to 411, and Glu-447; these read SRG and DGLR. His-451 is a Zn(2+) binding site. Tyr-474 contacts substrate. His-515 contributes to the Zn(2+) binding site. Residues Cys-595, Cys-598, and Cys-603 each contribute to the [4Fe-4S] cluster site.

The protein belongs to the ThiC family. Homodimer. It depends on [4Fe-4S] cluster as a cofactor.

The enzyme catalyses 5-amino-1-(5-phospho-beta-D-ribosyl)imidazole + S-adenosyl-L-methionine = 4-amino-2-methyl-5-(phosphooxymethyl)pyrimidine + CO + 5'-deoxyadenosine + formate + L-methionine + 3 H(+). Its pathway is cofactor biosynthesis; thiamine diphosphate biosynthesis. Its function is as follows. Catalyzes the synthesis of the hydroxymethylpyrimidine phosphate (HMP-P) moiety of thiamine from aminoimidazole ribotide (AIR) in a radical S-adenosyl-L-methionine (SAM)-dependent reaction. This Burkholderia thailandensis (strain ATCC 700388 / DSM 13276 / CCUG 48851 / CIP 106301 / E264) protein is Phosphomethylpyrimidine synthase.